Here is a 473-residue protein sequence, read N- to C-terminus: MLRNSNMRWRLPLICFVWEIAMIVLFGIFVRYNDEADPHWPIFMKHENITSDIENDFYFRYPSFQDVHVMIFVGFGFLMTFLQRYGFGSVAFNFLLAAFGIQWALLMQGWFHTFVNGKILIGVESLINADFCVGSVCIAFGGVLGKVSPVQIMLMTLFQVTLFAVNEWILLNKLHVIDAGGSMTIHTFGAYFGLTVAWILSRPKLKQNNDKEGSTYISDLFSMIGTLFLWMYWPSFNSAISYHGDAQHRAAINTYCSLAACVLTTVAISSVVNKKGKLEMVHIQNATLAGGVAVGTAAEMMLTPYGSLIVGFICGIVSTLGFTYLSPILSNKLRLHDTCGIHNLHAIPGLIGGIVGAVTAACATEGVYTAEGLKKMFHFEGEYADRTPSIQGIYQAAGIGVSLAFGIVGGTVVGCILKLPIWGDPSDENCFDDDVYWELREEDEEEHLGAANQYITHLPENFKLPDRTEISFK.

The Cytoplasmic segment spans residues 1-9 (MLRNSNMRW). A helical transmembrane segment spans residues 10 to 30 (RLPLICFVWEIAMIVLFGIFV). The Extracellular segment spans residues 31–61 (RYNDEADPHWPIFMKHENITSDIENDFYFRY). Asparagine 48 carries an N-linked (GlcNAc...) asparagine glycan. The helical transmembrane segment at 62–82 (PSFQDVHVMIFVGFGFLMTFL) threads the bilayer. At 83 to 86 (QRYG) the chain is on the cytoplasmic side. The chain crosses the membrane as a helical span at residues 87 to 107 (FGSVAFNFLLAAFGIQWALLM). Over 108–125 (QGWFHTFVNGKILIGVES) the chain is Extracellular. Residues 126 to 145 (LINADFCVGSVCIAFGGVLG) traverse the membrane as a helical segment. The Cytoplasmic portion of the chain corresponds to 146–151 (KVSPVQ). The chain crosses the membrane as a helical span at residues 152–171 (IMLMTLFQVTLFAVNEWILL). The Extracellular portion of the chain corresponds to 172–179 (NKLHVIDA). The chain crosses the membrane as a helical span at residues 180–200 (GGSMTIHTFGAYFGLTVAWIL). The Cytoplasmic portion of the chain corresponds to 201–219 (SRPKLKQNNDKEGSTYISD). A helical membrane pass occupies residues 220-240 (LFSMIGTLFLWMYWPSFNSAI). The Extracellular segment spans residues 241-251 (SYHGDAQHRAA). The chain crosses the membrane as a helical span at residues 252-272 (INTYCSLAACVLTTVAISSVV). Topologically, residues 273–285 (NKKGKLEMVHIQN) are cytoplasmic. The helical transmembrane segment at 286 to 306 (ATLAGGVAVGTAAEMMLTPYG) threads the bilayer. Position 307 (serine 307) is a topological domain, extracellular. A helical membrane pass occupies residues 308–328 (LIVGFICGIVSTLGFTYLSPI). The Cytoplasmic segment spans residues 329 to 343 (LSNKLRLHDTCGIHN). A helical membrane pass occupies residues 344–364 (LHAIPGLIGGIVGAVTAACAT). Over 365 to 396 (EGVYTAEGLKKMFHFEGEYADRTPSIQGIYQA) the chain is Extracellular. Residues 397-417 (AGIGVSLAFGIVGGTVVGCIL) form a helical membrane-spanning segment. At 418-473 (KLPIWGDPSDENCFDDDVYWELREEDEEEHLGAANQYITHLPENFKLPDRTEISFK) the chain is on the cytoplasmic side.

This sequence belongs to the ammonium transporter (TC 2.A.49) family. Rh subfamily. As to quaternary structure, homotrimer.

It localises to the apical cell membrane. Functions as an ammonia transporter. In Xenopus laevis (African clawed frog), this protein is Ammonium transporter Rh type C (rhcg).